The chain runs to 89 residues: Small ribosomal subunit protein uS15 (89 aa).

This sequence belongs to the universal ribosomal protein uS15 family. Part of the 30S ribosomal subunit. Forms a bridge to the 50S subunit in the 70S ribosome, contacting the 23S rRNA.

One of the primary rRNA binding proteins, it binds directly to 16S rRNA where it helps nucleate assembly of the platform of the 30S subunit by binding and bridging several RNA helices of the 16S rRNA. In terms of biological role, forms an intersubunit bridge (bridge B4) with the 23S rRNA of the 50S subunit in the ribosome. This Aliivibrio salmonicida (strain LFI1238) (Vibrio salmonicida (strain LFI1238)) protein is Small ribosomal subunit protein uS15.